The primary structure comprises 150 residues: Endoribonuclease YbeY (150 aa).

Residues His-113, His-117, and His-123 each coordinate Zn(2+).

Belongs to the endoribonuclease YbeY family. It depends on Zn(2+) as a cofactor.

It localises to the cytoplasm. In terms of biological role, single strand-specific metallo-endoribonuclease involved in late-stage 70S ribosome quality control and in maturation of the 3' terminus of the 16S rRNA. The chain is Endoribonuclease YbeY from Syntrophotalea carbinolica (strain DSM 2380 / NBRC 103641 / GraBd1) (Pelobacter carbinolicus).